Reading from the N-terminus, the 222-residue chain is Alpha-S2-casein (222 aa).

The N-terminal stretch at 1–15 (MKFFIFTCLLAVALA) is a signal peptide. Ser-23, Ser-24, Ser-25, Ser-28, Ser-46, Ser-71, Ser-72, Ser-73, Ser-76, Ser-144, Ser-146, Ser-150, and Ser-158 each carry phosphoserine. The segment at residues 76–140 (SAEVATEEVK…AVPITPTLNR (65 aa)) is a repeat. Residues 158 to 222 (STEVFTKKTK…TKVIPYVRYL (65 aa)) constitute a repeat.

It belongs to the alpha-casein family. As to expression, mammary gland specific. Secreted in milk.

It localises to the secreted. Functionally, important role in the capacity of milk to transport calcium phosphate. Its function is as follows. Casocidin-I inhibits the growth of E.coli and S.carnosus. This chain is Alpha-S2-casein (CSN1S2), found in Bos taurus (Bovine).